The chain runs to 108 residues: UPF0060 membrane protein CC_1976 (108 aa).

Transmembrane regions (helical) follow at residues F4–W24, L27–L47, A59–E79, and R85–P105.

Belongs to the UPF0060 family.

It is found in the cell inner membrane. The chain is UPF0060 membrane protein CC_1976 from Caulobacter vibrioides (strain ATCC 19089 / CIP 103742 / CB 15) (Caulobacter crescentus).